The primary structure comprises 826 residues: Arsenite oxidase subunit AioA (826 aa).

3 residues coordinate [3Fe-4S] cluster: Cys22, Cys25, and Cys29. Substrate-binding residues include His196, Glu204, Arg419, and His423.

Belongs to the prokaryotic molybdopterin-containing oxidoreductase family. Heterodimer consisting of a large and a small subunit. It depends on [3Fe-4S] cluster as a cofactor. Requires Mo-bis(molybdopterin guanine dinucleotide) as cofactor.

It catalyses the reaction 2 oxidized [azurin] + arsenite + H2O = 2 reduced [azurin] + arsenate + 3 H(+). Functionally, involved in the detoxification of arsenic. Oxidizes As(III)O3(3-) (arsenite) to the somewhat less toxic As(V)O4(3-) (arsenate). In Herminiimonas arsenicoxydans, this protein is Arsenite oxidase subunit AioA (aioA).